The following is a 514-amino-acid chain: 2-isopropylmalate synthase (514 aa).

A Pyruvate carboxyltransferase domain is found at 4-266 (INVFDTSLRD…KTGLKLSELK (263 aa)). Mn(2+)-binding residues include Asp-13, His-201, His-203, and Asn-237. The interval 390-514 (ELTALQVTYG…AKREMAKVES (125 aa)) is regulatory domain.

The protein belongs to the alpha-IPM synthase/homocitrate synthase family. LeuA type 1 subfamily. Homodimer. The cofactor is Mn(2+).

It localises to the cytoplasm. The catalysed reaction is 3-methyl-2-oxobutanoate + acetyl-CoA + H2O = (2S)-2-isopropylmalate + CoA + H(+). It participates in amino-acid biosynthesis; L-leucine biosynthesis; L-leucine from 3-methyl-2-oxobutanoate: step 1/4. In terms of biological role, catalyzes the condensation of the acetyl group of acetyl-CoA with 3-methyl-2-oxobutanoate (2-ketoisovalerate) to form 3-carboxy-3-hydroxy-4-methylpentanoate (2-isopropylmalate). The chain is 2-isopropylmalate synthase from Shouchella clausii (strain KSM-K16) (Alkalihalobacillus clausii).